Here is a 362-residue protein sequence, read N- to C-terminus: Chalcone synthase A (362 aa).

Cys168 is a catalytic residue.

This sequence belongs to the thiolase-like superfamily. Chalcone/stilbene synthases family.

The catalysed reaction is (E)-4-coumaroyl-CoA + 3 malonyl-CoA + 3 H(+) = 2',4,4',6'-tetrahydroxychalcone + 3 CO2 + 4 CoA. The protein operates within secondary metabolite biosynthesis; flavonoid biosynthesis. The primary product of this enzyme is 4,2',4',6'-tetrahydroxychalcone (also termed naringenin-chalcone or chalcone) which can under specific conditions spontaneously isomerize into naringenin. The protein is Chalcone synthase A (CHSA) of Ipomoea trifida (Morning glory).